Here is a 285-residue protein sequence, read N- to C-terminus: MNNIIDGKALANEILADLKLEIQGFKEKTQTSPKLAIVLVGDNPASMIYIKNKIKNAQQVGIDTLLVNLSTNIYTDDLISKINELNLDKEISGIIVQLPLPSSIDENKILSAVLPSKDSDGFHPLNVGYLHSGINQGFIPCTALGCLAVIKKYAPNLNGKDAVIVGRSNIVGKPLSALLLKENCSVTICHSKTCNLSSITSKADIVVVAIGSPLKLTAEYFNPESIVIDVGINRISNNKIIGDVDFENVKSKVKYITPVPGGIGPMTIAFLLKNTVKAFKNAIAL.

Residues 166–168 (GRS), S191, and I232 each bind NADP(+).

This sequence belongs to the tetrahydrofolate dehydrogenase/cyclohydrolase family. As to quaternary structure, homodimer.

The enzyme catalyses (6R)-5,10-methylene-5,6,7,8-tetrahydrofolate + NADP(+) = (6R)-5,10-methenyltetrahydrofolate + NADPH. It catalyses the reaction (6R)-5,10-methenyltetrahydrofolate + H2O = (6R)-10-formyltetrahydrofolate + H(+). The protein operates within one-carbon metabolism; tetrahydrofolate interconversion. Catalyzes the oxidation of 5,10-methylenetetrahydrofolate to 5,10-methenyltetrahydrofolate and then the hydrolysis of 5,10-methenyltetrahydrofolate to 10-formyltetrahydrofolate. The sequence is that of Bifunctional protein FolD from Rickettsia typhi (strain ATCC VR-144 / Wilmington).